Reading from the N-terminus, the 351-residue chain is MTTLTSPSTTPLTYRDAGVDIDAGNTLVERIKPLVKRSFRPEVMSGLGGFGALFNLAGKYKEPVLVSGTDGVGTKLKLAQQLNRHNTIGIDLVAMCVNDVLVQGAEPLFFLDYFATGKLDIDTATAVISGIALGCEQSGCALIGGETAEMPDMYPPGEYDLAGFCVAAVEKSQLLDGSQVREGDVLIGIASSGPHSNGYSLIRRIYERAGSPADLDIHGTRLIDTLMAPTTLYVKPILKLLHTHSDAIHAMAHITGGGLTENIIRVIPPNLGLRIDANAWTQPPVFQWLQSEGALADTEMWRTFNCGIGFVLVATPNQVAPLGQALDNQGLAHWQIGRVFTPVGNERVHIG.

The protein belongs to the AIR synthase family.

Its subcellular location is the cytoplasm. The catalysed reaction is 2-formamido-N(1)-(5-O-phospho-beta-D-ribosyl)acetamidine + ATP = 5-amino-1-(5-phospho-beta-D-ribosyl)imidazole + ADP + phosphate + H(+). Its pathway is purine metabolism; IMP biosynthesis via de novo pathway; 5-amino-1-(5-phospho-D-ribosyl)imidazole from N(2)-formyl-N(1)-(5-phospho-D-ribosyl)glycinamide: step 2/2. This is Phosphoribosylformylglycinamidine cyclo-ligase from Xylella fastidiosa (strain 9a5c).